The chain runs to 101 residues: Large ribosomal subunit protein eL21 (101 aa).

Basic residues predominate over residues Met1–Lys18. Residues Met1 to Gly24 form a disordered region.

It belongs to the eukaryotic ribosomal protein eL21 family.

This Saccharolobus solfataricus (strain ATCC 35092 / DSM 1617 / JCM 11322 / P2) (Sulfolobus solfataricus) protein is Large ribosomal subunit protein eL21 (rpl21e).